Reading from the N-terminus, the 594-residue chain is Dual specificity protein phosphatase CDC14A (594 aa).

The segment at 7-162 (ELIGACEFMK…GLQHGFFDFE (156 aa)) is a. A linker region spans residues 163–176 (TFDVDEYEHYERVE). A b region spans residues 177–343 (NGDFNWIVPG…QGDIFRSKLK (167 aa)). Residues 179–336 (DFNWIVPGKF…KQASLWVQGD (158 aa)) enclose the Tyrosine-protein phosphatase domain. C278 (phosphocysteine intermediate) is an active-site residue. Residues 396-435 (GDKLRALKSQRQPRTSPSCAFRSDDTKGHPRAVSQPFRLS) are disordered. A compositionally biased stretch (polar residues) spans 404-413 (SQRQPRTSPS). Position 484 is a phosphoserine (S484). The segment at 487–560 (NLNAATDDPE…PGPHSAKTEE (74 aa)) is disordered. The segment covering 500–531 (TSSSSKAGFTASPFTNLLNGSSQPTTRNYPEL) has biased composition (polar residues). Low complexity predominate over residues 532–549 (NNNQYNRSSNSNGGNLNS). S583 carries the post-translational modification Phosphoserine.

This sequence belongs to the protein-tyrosine phosphatase family. Non-receptor class CDC14 subfamily. Interacts with KIF20A, which is required to localize CDC14 to the midzone of the mitotic spindle.

The protein localises to the nucleus. Its subcellular location is the cytoplasm. The protein resides in the cytoskeleton. It localises to the microtubule organizing center. It is found in the centrosome. The protein localises to the spindle pole. Its subcellular location is the spindle. The protein resides in the cell projection. It localises to the kinocilium. It is found in the stereocilium. The catalysed reaction is O-phospho-L-tyrosyl-[protein] + H2O = L-tyrosyl-[protein] + phosphate. The enzyme catalyses O-phospho-L-seryl-[protein] + H2O = L-seryl-[protein] + phosphate. It catalyses the reaction O-phospho-L-threonyl-[protein] + H2O = L-threonyl-[protein] + phosphate. Its function is as follows. Dual-specificity phosphatase. Required for centrosome separation and productive cytokinesis during cell division. Dephosphorylates SIRT2 around early anaphase. May dephosphorylate the APC subunit FZR1/CDH1, thereby promoting APC-FZR1 dependent degradation of mitotic cyclins and subsequent exit from mitosis. Required for normal hearing. The chain is Dual specificity protein phosphatase CDC14A (CDC14A) from Homo sapiens (Human).